A 1088-amino-acid chain; its full sequence is RNA-directed RNA polymerase (1088 aa).

The RdRp catalytic domain maps to 501–687 (LSYGDVTRFL…AKRYIAGGKI (187 aa)).

Belongs to the reoviridae RNA-directed RNA polymerase family. Interacts with VP3 (Potential). Interacts with VP2; this interaction activates VP1. Interacts with NSP5; this interaction is probably necessary for the formation of functional virus factories. Interacts with NSP2; this interaction is weak. It depends on Mg(2+) as a cofactor.

The protein resides in the virion. It carries out the reaction RNA(n) + a ribonucleoside 5'-triphosphate = RNA(n+1) + diphosphate. RNA-directed RNA polymerase that is involved in both transcription and genome replication. Together with VP3 capping enzyme, forms an enzyme complex positioned near the channels situated at each of the five-fold vertices of the core. Following infection, the outermost layer of the virus is lost, leaving a double-layered particle (DLP) made up of the core and VP6 shell. VP1 then catalyzes the transcription of fully conservative plus-strand genomic RNAs that are extruded through the DLP's channels into the cytoplasm where they function as mRNAs for translation of viral proteins. One copy of each of the viral (+)RNAs is also recruited during core assembly, together with newly synthesized polymerase complexes and VP2. The polymerase of these novo-formed particles catalyzes the synthesis of complementary minus-strands leading to dsRNA formation. To do so, the polymerase specifically recognizes and binds 4 bases 5'-UGUG-3' in the conserved 3'-sequence of plus-strand RNA templates. VP2 presumably activates the autoinhibited VP1-RNA complex to coordinate packaging and genome replication. Once dsRNA synthesis is complete, the polymerase switches to the transcriptional mode, thus providing secondary transcription. In Rotavirus A (strain RVA/Cow/United States/NCDV-Lincoln/1969/G6P6[1]) (RV-A), this protein is RNA-directed RNA polymerase.